Reading from the N-terminus, the 75-residue chain is Beta-defensin 42 (75 aa).

The first 21 residues, 1 to 21 (MNLRLSCLLFILVTSLPAGRC), serve as a signal peptide directing secretion. Intrachain disulfides connect cysteine 33–cysteine 60, cysteine 40–cysteine 54, and cysteine 44–cysteine 61.

This sequence belongs to the beta-defensin family. In terms of tissue distribution, epididymis-specific, with highest levels in the initial segment and distal caput.

It is found in the secreted. In terms of biological role, has bactericidal activity. May play a role in the antimicrobial protection of sperm and urogenital tract epithelia. This chain is Beta-defensin 42, found in Mus musculus (Mouse).